Here is a 64-residue protein sequence, read N- to C-terminus: Cold shock protein CapA (64 aa).

One can recognise a CSD domain in the interval 7 to 64 (GTVKWFNDEKGFGFITPQGGGDDLFVHFKAIESDGFKSLKEGQTVSFVAEKGQKGMQA).

The protein localises to the cytoplasm. Affects cell viability at low temperatures. The protein is Cold shock protein CapA (capA) of Pseudomonas fragi.